A 232-amino-acid polypeptide reads, in one-letter code: Large ribosomal subunit protein uL1 (232 aa).

It belongs to the universal ribosomal protein uL1 family. Part of the 50S ribosomal subunit.

Its function is as follows. Binds directly to 23S rRNA. The L1 stalk is quite mobile in the ribosome, and is involved in E site tRNA release. Protein L1 is also a translational repressor protein, it controls the translation of the L11 operon by binding to its mRNA. This is Large ribosomal subunit protein uL1 from Bacteroides fragilis (strain ATCC 25285 / DSM 2151 / CCUG 4856 / JCM 11019 / LMG 10263 / NCTC 9343 / Onslow / VPI 2553 / EN-2).